The chain runs to 181 residues: Putative ankyrin repeat protein RF_0782 (181 aa).

ANK repeat units follow at residues 24–53 (YHYSPLATAASVGSVEIVEALLSKGADINF) and 54–83 (GSTPSFITAIKNGHLKICYLLKALGANTQI).

This is Putative ankyrin repeat protein RF_0782 from Rickettsia felis (strain ATCC VR-1525 / URRWXCal2) (Rickettsia azadi).